A 96-amino-acid polypeptide reads, in one-letter code: UPF0235 protein VC_0458 (96 aa).

This sequence belongs to the UPF0235 family.

This Vibrio cholerae serotype O1 (strain ATCC 39315 / El Tor Inaba N16961) protein is UPF0235 protein VC_0458.